The chain runs to 268 residues: Ribosomal RNA small subunit methyltransferase A (268 aa).

S-adenosyl-L-methionine is bound by residues N16, L18, G43, E64, D89, and N110.

It belongs to the class I-like SAM-binding methyltransferase superfamily. rRNA adenine N(6)-methyltransferase family. RsmA subfamily.

The protein resides in the cytoplasm. The enzyme catalyses adenosine(1518)/adenosine(1519) in 16S rRNA + 4 S-adenosyl-L-methionine = N(6)-dimethyladenosine(1518)/N(6)-dimethyladenosine(1519) in 16S rRNA + 4 S-adenosyl-L-homocysteine + 4 H(+). In terms of biological role, specifically dimethylates two adjacent adenosines (A1518 and A1519) in the loop of a conserved hairpin near the 3'-end of 16S rRNA in the 30S particle. May play a critical role in biogenesis of 30S subunits. The polypeptide is Ribosomal RNA small subunit methyltransferase A (Pseudomonas savastanoi pv. phaseolicola (strain 1448A / Race 6) (Pseudomonas syringae pv. phaseolicola (strain 1448A / Race 6))).